The primary structure comprises 69 residues: Large ribosomal subunit protein uL29 (69 aa).

Belongs to the universal ribosomal protein uL29 family.

The chain is Large ribosomal subunit protein uL29 from Sulfolobus acidocaldarius (strain ATCC 33909 / DSM 639 / JCM 8929 / NBRC 15157 / NCIMB 11770).